Reading from the N-terminus, the 801-residue chain is Protein ACCUMULATION AND REPLICATION OF CHLOROPLASTS 6, chloroplastic (801 aa).

A chloroplast-targeting transit peptide spans 1 to 67; sequence MEALSHVGIG…SSSFATATTT (67 aa). Residues 68 to 618 are Stromal-facing; sequence ATLVSPPPSI…ADMLKEASVK (551 aa). Positions 89 to 153 constitute a J domain; the sequence is DFYQVLGAQT…RSRREYNEGL (65 aa). Residues 619 to 638 form a helical membrane-spanning segment; the sequence is ILAAGVAIGLISLFSQKYFL. Over 639–801 the chain is Chloroplast intermembrane; sequence KSSSSFQRKD…KITEGSVLAS (163 aa). The interaction with PDV2 stretch occupies residues 639-801; the sequence is KSSSSFQRKD…KITEGSVLAS (163 aa).

In terms of assembly, self-interacts. Part of a complex made of ARC3, ARC6, FTSZ1 and FTSZ2. Interacts with FTSZ2-1 and FTSZ2-2 (via C-terminus), but not with FTSZ1; this interaction enables ARC3 binding to FTSZ2. Binds to CDT1A. Interacts (via C-terminus) with PDV2 (via C-terminus) in the chloroplast intermembrane space; this interaction induces homodimerization and leads to the formation of a heterotetramer containing two ARC6 and two PDV2 subunits. Interacts with MCD1 in the chloroplast stroma and facilitates its subsequent binding to FtsZ2-1. Interacts (via J domain) with CJD1 (via J-like domain). As to expression, mostly expressed in young leaves.

It is found in the plastid. It localises to the chloroplast inner membrane. Functionally, component of the plastid division machinery consisting in a binary fission accomplished by the simultaneous constriction of the FtsZ ring on the stromal side of the inner envelope membrane, and the ARC5 ring on the cytosolic side of the outer envelope membrane. Involved in the initiation of proplastid and plastid division (including chloroplasts, statoliths and leukoplasts). Promotes the assembly and/or stabilization of the plastid-dividing FtsZ ring, functioning as an antagonistic regulator of FtsZ dynamics against CDP1 and facilitating MCD1 positioning to membrane tethered FtsZ filaments to form the chloroplast Z-Ring; inhibits GDP-induced disassembly of FTSZ2 but enables ARC3 binding to FTSZ2-1. Relays plastid division site position between stroma and outer surface via interactions with the stromal FtsZ ring and the outer membrane PDV2 that recruits cytoplasmic ARC5 ring. Required for plastid equatorial positioning of PDV2 and ARC5. May contribute to gravitropism in stems and hypocotyls. Seems to influence stromule (stroma-filled tubular extensions of the plastid envelope membrane) length and frequency. In Arabidopsis thaliana (Mouse-ear cress), this protein is Protein ACCUMULATION AND REPLICATION OF CHLOROPLASTS 6, chloroplastic.